Reading from the N-terminus, the 576-residue chain is Probable proline--tRNA ligase, mitochondrial (576 aa).

This sequence belongs to the class-II aminoacyl-tRNA synthetase family.

The protein resides in the mitochondrion. It catalyses the reaction tRNA(Pro) + L-proline + ATP = L-prolyl-tRNA(Pro) + AMP + diphosphate. This Saccharomyces cerevisiae (strain ATCC 204508 / S288c) (Baker's yeast) protein is Probable proline--tRNA ligase, mitochondrial (AIM10).